Here is a 568-residue protein sequence, read N- to C-terminus: CDK5 and ABL1 enzyme substrate 1 (568 aa).

Residues 1–31 show a composition bias toward low complexity; it reads MAAATATAGTAACSSSSSSRGGSTDAAATSG. 2 disordered regions span residues 1–94 and 130–169; these read MAAA…PGAR and PSLV…QEEL. The interval 1 to 98 is interaction with TDRD7; it reads MAAATATAGT…TKPGARARLS (98 aa). Pro residues predominate over residues 33-45; the sequence is QPPPPPPATAPPE. A compositionally biased stretch (basic and acidic residues) spans 46–56; sequence PLRKPRMDPRR. The tract at residues 140 to 427 is interaction with CDK3; sequence PSQPPRSAPA…TTVIDYVKPS (288 aa). Phosphoserine is present on S248. S274 is subject to Phosphoserine; by CDK2 and CDK3. Residue T350 is modified to Phosphothreonine.

It belongs to the cyclin family. In terms of assembly, found in a complex with p53/TP53. Found in a number of complexes with CDK2, CDK3, CDK5, ABL1, TDRD7, CDK17, CCNA1, CCNE1 and TP73. Interacts with CDK2, CDK3, CDK5, ABL1 and TDRD7. Post-translationally, phosphorylated on Ser-274 by CCNE1/CDK3. Phosphorylated on serine/threonine residues by CDK5 and on tyrosine residues by ABL1. Also phosphorylated in vitro by CCNA1/CDK2, CCNE1/CDK2, CCNA1/CDK3 and CCNE1/CDK3. In terms of tissue distribution, ubiquitous. Expressed in postnatal day 1 (P1), in postmitotic neurons of the subplate, cortex (V/VI) and marginal zone; in postnatal day 7 (P7), in all layers of the cerebral cortex and in the CA1 and CA2 regions of the hippocampus (at protein level). Highly expressed in brain, kidney, liver and lung.

It localises to the nucleus. The protein resides in the cytoplasm. It is found in the cell projection. Its subcellular location is the growth cone. Cyclin-dependent kinase binding protein. Enhances cyclin-dependent kinase tyrosine phosphorylation by nonreceptor tyrosine kinases, such as that of CDK5 by activated ABL1, which leads to increased CDK5 activity and is critical for neuronal development, and that of CDK2 by WEE1, which leads to decreased CDK2 activity and growth inhibition. Positively affects neuronal outgrowth. Plays a role as a regulator for p53/p73-induced cell death. The chain is CDK5 and ABL1 enzyme substrate 1 (Cables1) from Mus musculus (Mouse).